The chain runs to 207 residues: MKIDKLNLDGKKDSIEVLDKIFSAKINKRLVDNVLYKTNANYKGRHAKTKQQNEITGSTSKIYAQKGTGGARHASRKAPIFVGGGVAHGPKGELAYKKRKLNKSEKKLSIASLITEKNKLNNLIIFSDFGNEIKKTKEMHSIIKKFEITNSLIILDKSSKEKIEKSVRNIPNVKVTDINHFSAFDIIKFKKVVFTESSIKELEKRYS.

Belongs to the universal ribosomal protein uL4 family. In terms of assembly, part of the 50S ribosomal subunit.

One of the primary rRNA binding proteins, this protein initially binds near the 5'-end of the 23S rRNA. It is important during the early stages of 50S assembly. It makes multiple contacts with different domains of the 23S rRNA in the assembled 50S subunit and ribosome. Its function is as follows. Forms part of the polypeptide exit tunnel. The protein is Large ribosomal subunit protein uL4 of Pelagibacter ubique (strain HTCC1062).